The chain runs to 358 residues: Peptide chain release factor 1 (358 aa).

Position 233 is an N5-methylglutamine (Gln-233).

The protein belongs to the prokaryotic/mitochondrial release factor family. Post-translationally, methylated by PrmC. Methylation increases the termination efficiency of RF1.

It is found in the cytoplasm. Functionally, peptide chain release factor 1 directs the termination of translation in response to the peptide chain termination codons UAG and UAA. In Clostridium botulinum (strain Loch Maree / Type A3), this protein is Peptide chain release factor 1.